A 473-amino-acid chain; its full sequence is Photosystem II CP43 reaction center protein (473 aa).

A propeptide spanning residues 1-14 is cleaved from the precursor; sequence MKTLYSLRRFYPVE. Position 15 is an N-acetylthreonine (Thr-15). Residue Thr-15 is modified to Phosphothreonine. A run of 5 helical transmembrane segments spans residues 69 to 93, 134 to 155, 178 to 200, 255 to 275, and 291 to 312; these read LFEV…PHLA, LIGP…KDRS, KALY…RKIT, KPFA…LSYS, and WFNN…ASQA. Residue Glu-367 coordinates [CaMn4O5] cluster. Residues 447 to 471 traverse the membrane as a helical segment; that stretch reads RARAAAAGFEKGIDRDFEPVLSMNP.

It belongs to the PsbB/PsbC family. PsbC subfamily. PSII is composed of 1 copy each of membrane proteins PsbA, PsbB, PsbC, PsbD, PsbE, PsbF, PsbH, PsbI, PsbJ, PsbK, PsbL, PsbM, PsbT, PsbX, PsbY, PsbZ, Psb30/Ycf12, at least 3 peripheral proteins of the oxygen-evolving complex and a large number of cofactors. It forms dimeric complexes. The cofactor is Binds multiple chlorophylls and provides some of the ligands for the Ca-4Mn-5O cluster of the oxygen-evolving complex. It may also provide a ligand for a Cl- that is required for oxygen evolution. PSII binds additional chlorophylls, carotenoids and specific lipids..

The protein localises to the plastid. It is found in the chloroplast thylakoid membrane. Functionally, one of the components of the core complex of photosystem II (PSII). It binds chlorophyll and helps catalyze the primary light-induced photochemical processes of PSII. PSII is a light-driven water:plastoquinone oxidoreductase, using light energy to abstract electrons from H(2)O, generating O(2) and a proton gradient subsequently used for ATP formation. The polypeptide is Photosystem II CP43 reaction center protein (Cycas taitungensis (Prince sago)).